Here is a 434-residue protein sequence, read N- to C-terminus: D-amino acid dehydrogenase (434 aa).

3-17 lines the FAD pocket; sequence VLVLGSGVIGTASAY.

It belongs to the DadA oxidoreductase family. It depends on FAD as a cofactor.

The catalysed reaction is a D-alpha-amino acid + A + H2O = a 2-oxocarboxylate + AH2 + NH4(+). It participates in amino-acid degradation; D-alanine degradation; NH(3) and pyruvate from D-alanine: step 1/1. Its function is as follows. Oxidative deamination of D-amino acids. This chain is D-amino acid dehydrogenase, found in Pseudomonas putida (strain ATCC 700007 / DSM 6899 / JCM 31910 / BCRC 17059 / LMG 24140 / F1).